A 2629-amino-acid polypeptide reads, in one-letter code: Telomerase protein component 1 (2629 aa).

4 TEP1 N-terminal repeats span residues 1-30 (MEKLCGYVPVHPDILSLKNRCLTMLSDIQP), 31-60 (LEKIHGQRSVNPDILSLENRCLTLLPDLQP), 61-90 (MEKIHGQRSVHPDILSSENRCLTLLPDLQS), and 91-120 (LEKLCGHMSSHPDVLSLENRCLATLPTVKR). Positions 231-689 (LKLTSGDSDS…VKHNLPPLPG (459 aa)) constitute a TROVE domain. The segment covering 390–401 (PRKHRSKTRSRQ) has biased composition (basic residues). The segment at 390 to 416 (PRKHRSKTRSRQPPRPQRTKPPFSESG) is disordered. In terms of domain architecture, NACHT spans 1175 to 1582 (RLSLVIGQAG…KFLTNLHVVA (408 aa)). 1181–1188 (GQAGQGKT) is an ATP binding site. 21 WD repeats span residues 1424–1461 (VLPQALTALEVTHSGLTVDQLHAVLSTWLTLPKETKSW), 1685–1724 (PISSSPTAVAFSPNGQRAAVGTAGGTIYLLNLRTWQEEKA), 1727–1765 (SGCDGISSFAFLSDTALFLTTFDGLLELWDLQHGCWVFQ), 1768–1807 (AHQYQITGCCLSPDRRLLATVCLGGYVKLWDTVQGQLAFQ), 1809–1848 (THPKSLNCITFHPEGQVVATGNWSGIVTFFQADGLKVTKE), 1851–1890 (GPGPSVRTLAFSAPGKVVALGRIDGTVELWAWQEGTRLAA), 1893–1934 (AQCG…GCLG), 1936–1975 (LYLSPALSVALNPDGDQVAVGYRGDGIKIYRISSGPQEAQ), 1978–2016 (ELNVAVSALVWLSPSVLVSGAEDGSLHGWMLRRNSLQSL), 2019–2058 (SSVCQKPVLGLAASQEFLASASEDFTVRLWPRQLLTQPHA), 2070–2109 (GHEGPVCCCSFSPDGRILATAGRDRNLLCWDVKVAQAPLL), 2116–2154 (CHRDWITGCTWTKDNILISCSSDGSVGLWNPEAGQQLGQ), 2157–2194 (GHQSAVSAVVAVEEHIVSVSRDGTLKVWDRQGVELTSI), 2200–2244 (PISQ…QIHT), 2247–2285 (GHSGPVTAAAASEASGLLLTSDNSSVRLWQIPKEADDTC), 2288–2327 (RSSAVITAVAWAPDGSLVVSGNEAGELTLWQKAQAVATAR), 2329–2365 (PGRVSDLIWCSANAFFVLSANENVSEWQVELRKGSTC), 2378–2427 (EDLG…SSIL), 2470–2510 (PNGS…GEWV), 2555–2592 (IHLGSVTALHVLPGLLVTASEDRDVKLWERPSMQLLGL), and 2594–2628 (RCEGPVSCLEPWMEPSSPLQLAVGDAQGNLYFLSW).

Associated component of the telomerase holoenzyme complex. Component of the vault ribonucleoprotein particle, at least composed of MVP, PARP4 and one or more vault RNAs (vRNAs). Binds to VAULTRC1, VAULTRC2 and VAULTRC4/hvg4 vRNAs.

It is found in the nucleus. It localises to the chromosome. The protein resides in the telomere. Functionally, component of the telomerase ribonucleoprotein complex that is essential for the replication of chromosome termini. Also a component of the ribonucleoprotein vaults particle, a multi-subunit structure involved in nucleo-cytoplasmic transport. Responsible for the localizing and stabilizing vault RNA (vRNA) association in the vault ribonucleoprotein particle. Binds to TERC. The polypeptide is Telomerase protein component 1 (Tep1) (Rattus norvegicus (Rat)).